The chain runs to 338 residues: Photosystem II assembly lipoprotein Ycf48 (338 aa).

An N-terminal signal peptide occupies residues 1-23; the sequence is MKRLFSNVINLTLVLIVGVALSG. C24 is lipidated: N-palmitoyl cysteine. A lipid anchor (S-diacylglycerol cysteine) is attached at C24.

Belongs to the Ycf48 family. In terms of assembly, part of early PSII assembly complexes which includes D1 (psbA) and PsbI; not found in mature PSII. Binds to the lumenal side of PSII complexes. Interacts with YidC.

Its subcellular location is the cellular thylakoid membrane. A factor required for optimal assembly of photosystem II (PSII), acting in the early stages of PSII assembly. Also plays a role in replacement of photodamaged D1 (psbA). Assists YidC in synthesis of chlorophyll-binding proteins. The chain is Photosystem II assembly lipoprotein Ycf48 from Prochlorococcus marinus (strain NATL2A).